The primary structure comprises 315 residues: B3 domain-containing protein At1g05920 (315 aa).

The interval 24–129 is disordered; it reads MISRDNQKKT…PQVASVPKSV (106 aa). Composition is skewed to basic and acidic residues over residues 39 to 51, 66 to 83, and 100 to 114; these read VREEKGKRREEMI, KEGKGKRREEMISRDNRT, and FDHVPRGTREPHAYL. A DNA-binding region (TF-B3) is located at residues 204–306; sequence INTVIQNDFL…ILCFALVPPT (103 aa).

The protein localises to the nucleus. This chain is B3 domain-containing protein At1g05920, found in Arabidopsis thaliana (Mouse-ear cress).